The following is a 363-amino-acid chain: Pyrimidine monooxygenase RutA (363 aa).

FMN is bound by residues Ile49–Lys50, Asn115, Glu124, Arg140–Tyr141, and Ser190.

This sequence belongs to the NtaA/SnaA/DszA monooxygenase family. RutA subfamily.

It carries out the reaction uracil + FMNH2 + NADH + O2 = (Z)-3-ureidoacrylate + FMN + NAD(+) + H2O + H(+). It catalyses the reaction thymine + FMNH2 + NADH + O2 = (Z)-2-methylureidoacrylate + FMN + NAD(+) + H2O + H(+). Functionally, catalyzes the pyrimidine ring opening between N-3 and C-4 by an unusual flavin hydroperoxide-catalyzed mechanism, adding oxygen atoms in the process to yield ureidoacrylate peracid, that immediately reacts with FMN forming ureidoacrylate and FMN-N(5)-oxide. The FMN-N(5)-oxide reacts spontaneously with NADH to produce FMN. Requires the flavin reductase RutF to regenerate FMN in vivo. In Klebsiella pneumoniae subsp. pneumoniae (strain ATCC 700721 / MGH 78578), this protein is Pyrimidine monooxygenase RutA.